We begin with the raw amino-acid sequence, 342 residues long: Palmitoyltransferase PFA4 (342 aa).

Residues 1–8 are Cytoplasmic-facing; that stretch reads MITFSNPW. A helical membrane pass occupies residues 9-29; the sequence is IGVIIPCIIIFTLSTFSAIYI. Topologically, residues 30–38 are lumenal; the sequence is LPHHVSNNE. The chain crosses the membrane as a helical span at residues 39 to 59; it reads LTLFICASAMVWISYIIAIIV. Residues 60 to 124 are Cytoplasmic-facing; that stretch reads PPGSPPKNYT…GHRNMPHFMR (65 aa). The 51-residue stretch at 77 to 127 folds into the DHHC domain; sequence MYCLKCKAYKPERTHHSKALGVCVLKMDHHCPWTNNTVGHRNMPHFMRFLV. The active-site S-palmitoyl cysteine intermediate is cysteine 107. A helical transmembrane segment spans residues 125 to 145; that stretch reads FLVWVDMTVGYLFIRLCIRIM. Residues 146–162 are Lumenal-facing; it reads KLWRDKHLPSYLFDKTE. Residues 163–183 traverse the membrane as a helical segment; the sequence is VILSIVFLPASFFVLFTVGIL. The Cytoplasmic segment spans residues 184-342; the sequence is TIRVFVNMCN…ADFGVEHTDI (159 aa).

The protein belongs to the DHHC palmitoyltransferase family. PFA4 subfamily.

The protein resides in the endoplasmic reticulum membrane. It catalyses the reaction L-cysteinyl-[protein] + hexadecanoyl-CoA = S-hexadecanoyl-L-cysteinyl-[protein] + CoA. Functionally, mediates the reversible addition of palmitate to target proteins, thereby regulating their membrane association and biological function. The chain is Palmitoyltransferase PFA4 from Yarrowia lipolytica (strain CLIB 122 / E 150) (Yeast).